A 41-amino-acid chain; its full sequence is Putative toxic protein TimP (41 aa).

A membrane pass occupies residues 1–17 (MKIRCFCIVLIVSGALL).

Belongs to the TimP toxin family.

It localises to the cell inner membrane. Its function is as follows. Putative toxic component of a potential type I toxin-antitoxin (TA) system. Neutralized by sRNA antitoxin TimR which binds to the 5' UTR of timP mRNA and inhibits translation. The antitoxin gene is encoded immediately upstream and transcribed divergently from the toxin gene; antitoxin RNA is less stable than timP mRNA. The chain is Putative toxic protein TimP from Escherichia coli (strain K12).